An 862-amino-acid polypeptide reads, in one-letter code: Pentatricopeptide repeat-containing protein At1g74850, chloroplastic (862 aa).

The transit peptide at 1 to 66 directs the protein to the chloroplast; sequence MNLAIPNPNS…DLVLGNPSVS (66 aa). PPR repeat units lie at residues 104–139, 140–174, 175–209, 210–245, 246–280, 281–315, 316–350, 351–385, 386–420, 421–455, 456–490, 491–525, 526–560, 561–595, and 596–630; these read SLND…WCKP, NEHI…GVSR, SVFS…KISP, SILT…GIQP, DIVT…GIVP, DLTT…GSLP, DITS…GCTP, NANT…NTDP, DAAT…NIEP, DMET…DIVP, SSKA…GSNP, SIET…GIPR, NRDT…RCDP, DERT…DILP, and SIMC…RVSN. In terms of domain architecture, Smr spans 713–801; it reads VDVHRMSEGG…RIMCQRSQLK (89 aa). A disordered region spans residues 831-862; the sequence is GTRASTSSDTNHSGNPTQRRTRTKKELAGSTA. Residues 833 to 848 are compositionally biased toward polar residues; that stretch reads RASTSSDTNHSGNPTQ.

The protein belongs to the PPR family. P subfamily. As to expression, mostly expressed in leaves, stems and flowers, but barely in roots.

Its subcellular location is the plastid. It is found in the chloroplast. Involved in plastid gene expression. This is Pentatricopeptide repeat-containing protein At1g74850, chloroplastic (PTAC2) from Arabidopsis thaliana (Mouse-ear cress).